A 487-amino-acid polypeptide reads, in one-letter code: Betaine aldehyde dehydrogenase (487 aa).

The K(+) site is built by Ile-27 and Asp-93. 149–151 (GAW) lines the NAD(+) pocket. Residue Lys-161 is the Charge relay system of the active site. NAD(+) contacts are provided by residues 175–178 (KPSE) and 228–231 (SVPT). Leu-243 contacts K(+). Glu-249 (proton acceptor) is an active-site residue. Positions 251, 283, and 384 each coordinate NAD(+). Cys-283 functions as the Nucleophile in the catalytic mechanism. At Cys-283 the chain carries Cysteine sulfenic acid (-SOH). Residues Lys-454 and Gly-457 each contribute to the K(+) site. Glu-461 acts as the Charge relay system in catalysis.

Belongs to the aldehyde dehydrogenase family. As to quaternary structure, dimer of dimers. The cofactor is K(+).

The catalysed reaction is betaine aldehyde + NAD(+) + H2O = glycine betaine + NADH + 2 H(+). It participates in amine and polyamine biosynthesis; betaine biosynthesis via choline pathway; betaine from betaine aldehyde: step 1/1. In terms of biological role, involved in the biosynthesis of the osmoprotectant glycine betaine. Catalyzes the irreversible oxidation of betaine aldehyde to the corresponding acid. This Brucella suis (strain ATCC 23445 / NCTC 10510) protein is Betaine aldehyde dehydrogenase.